The sequence spans 183 residues: Archaemetzincin (183 aa).

H132 is a Zn(2+) binding site. Catalysis depends on E133, which acts as the Proton acceptor. 6 residues coordinate Zn(2+): H136, H142, C143, C148, C167, and C170.

Belongs to the peptidase M54 family. As to quaternary structure, monomer. Requires Zn(2+) as cofactor.

Probable zinc metalloprotease whose natural substrate is unknown. The sequence is that of Archaemetzincin from Aeropyrum pernix (strain ATCC 700893 / DSM 11879 / JCM 9820 / NBRC 100138 / K1).